A 344-amino-acid chain; its full sequence is MKTNFLVLLSALLAASSAVTATLIPAKCKHEAFSQRAGSSLNAAIKSDGRKYFGTCADPGTLGNWQISNIIKAEMGQVTPENSMKWDATQPQRGTFNFGNADRLVDFATSNGKLIRGHTLVWHSQLPSWVSSITDANDLTNVIQNRIATVVGRYKGKVYAWDVVNEMFNENGSFRESVFYKLLGEDFVKIAFEAARKADPNAKLYINDYNLDDPDYPKLKSLVANVKKWRSQGVPIDGIGSQSHLQAAGHFLDASKVGGAMQALCAAASECAMTELDIAQASPDQYTKATEACLNQKNCVGITVWGVSDNTSWRKNANPLLWNSSYQKKPAYNAVLSTLNSYQA.

An N-terminal signal peptide occupies residues 1 to 21 (MKTNFLVLLSALLAASSAVTA). Residues 35–338 (QRAGSSLNAA…KPAYNAVLST (304 aa)) enclose the GH10 domain. Catalysis depends on Glu-166, which acts as the Proton donor. A glycan (N-linked (GlcNAc...) asparagine) is linked at Asn-171. Glu-275 (nucleophile) is an active-site residue. Cysteines 293 and 299 form a disulfide. 2 N-linked (GlcNAc...) asparagine glycosylation sites follow: Asn-310 and Asn-323.

The protein belongs to the glycosyl hydrolase 10 (cellulase F) family.

The protein resides in the secreted. It catalyses the reaction Endohydrolysis of (1-&gt;4)-beta-D-xylosidic linkages in xylans.. Its pathway is glycan degradation; xylan degradation. Its function is as follows. Endo-1,4-beta-xylanase involved in the hydrolysis of xylan, a major structural heterogeneous polysaccharide found in plant biomass representing the second most abundant polysaccharide in the biosphere, after cellulose. This Mycosarcoma maydis (Corn smut fungus) protein is Endo-1,4-beta-xylanase UM03411.